Consider the following 254-residue polypeptide: Imidazole glycerol phosphate synthase subunit HisF (254 aa).

Active-site residues include aspartate 13 and aspartate 132.

This sequence belongs to the HisA/HisF family. In terms of assembly, heterodimer of HisH and HisF.

It localises to the cytoplasm. It catalyses the reaction 5-[(5-phospho-1-deoxy-D-ribulos-1-ylimino)methylamino]-1-(5-phospho-beta-D-ribosyl)imidazole-4-carboxamide + L-glutamine = D-erythro-1-(imidazol-4-yl)glycerol 3-phosphate + 5-amino-1-(5-phospho-beta-D-ribosyl)imidazole-4-carboxamide + L-glutamate + H(+). It functions in the pathway amino-acid biosynthesis; L-histidine biosynthesis; L-histidine from 5-phospho-alpha-D-ribose 1-diphosphate: step 5/9. Its function is as follows. IGPS catalyzes the conversion of PRFAR and glutamine to IGP, AICAR and glutamate. The HisF subunit catalyzes the cyclization activity that produces IGP and AICAR from PRFAR using the ammonia provided by the HisH subunit. This chain is Imidazole glycerol phosphate synthase subunit HisF, found in Wolinella succinogenes (strain ATCC 29543 / DSM 1740 / CCUG 13145 / JCM 31913 / LMG 7466 / NCTC 11488 / FDC 602W) (Vibrio succinogenes).